A 251-amino-acid chain; its full sequence is Adapter protein MecA (251 aa).

This sequence belongs to the MecA family. As to quaternary structure, homodimer.

Its function is as follows. Enables the recognition and targeting of unfolded and aggregated proteins to the ClpC protease or to other proteins involved in proteolysis. The sequence is that of Adapter protein MecA from Streptococcus agalactiae serotype III (strain NEM316).